A 226-amino-acid polypeptide reads, in one-letter code: UPF0758 protein gbs1168 (226 aa).

The MPN domain maps to 103 to 225 (QILSSEQLAR…YYSFREEADI (123 aa)). Zn(2+) is bound by residues His-174, His-176, and Asp-187. The JAMM motif signature appears at 174–187 (HNHPSGSPNPSESD).

The protein belongs to the UPF0758 family.

This Streptococcus agalactiae serotype III (strain NEM316) protein is UPF0758 protein gbs1168.